We begin with the raw amino-acid sequence, 203 residues long: Holliday junction branch migration complex subunit RuvA (203 aa).

Residues 1-64 are domain I; the sequence is MIGRLRGIIL…EDAQLLYGFN (64 aa). Positions 65–142 are domain II; the sequence is NKQERTLFKE…KGLHGDLFTP (78 aa). The segment at 143 to 154 is flexible linker; it reads AVDLVLTSPASP. Residues 155–203 are domain III; sequence TSEDAEQEAVAALVALGYKPQEASRMVNKIARPDASSETLIRDALRAAL.

This sequence belongs to the RuvA family. Homotetramer. Forms an RuvA(8)-RuvB(12)-Holliday junction (HJ) complex. HJ DNA is sandwiched between 2 RuvA tetramers; dsDNA enters through RuvA and exits via RuvB. An RuvB hexamer assembles on each DNA strand where it exits the tetramer. Each RuvB hexamer is contacted by two RuvA subunits (via domain III) on 2 adjacent RuvB subunits; this complex drives branch migration. In the full resolvosome a probable DNA-RuvA(4)-RuvB(12)-RuvC(2) complex forms which resolves the HJ.

It is found in the cytoplasm. Its function is as follows. The RuvA-RuvB-RuvC complex processes Holliday junction (HJ) DNA during genetic recombination and DNA repair, while the RuvA-RuvB complex plays an important role in the rescue of blocked DNA replication forks via replication fork reversal (RFR). RuvA specifically binds to HJ cruciform DNA, conferring on it an open structure. The RuvB hexamer acts as an ATP-dependent pump, pulling dsDNA into and through the RuvAB complex. HJ branch migration allows RuvC to scan DNA until it finds its consensus sequence, where it cleaves and resolves the cruciform DNA. The protein is Holliday junction branch migration complex subunit RuvA of Salmonella choleraesuis (strain SC-B67).